Reading from the N-terminus, the 152-residue chain is Smith-Magenis syndrome chromosomal region candidate gene 5 protein homolog (152 aa).

A disordered region spans residues threonine 41–serine 77. Residues glutamine 49 to alanine 62 show a composition bias toward pro residues.

The polypeptide is Smith-Magenis syndrome chromosomal region candidate gene 5 protein homolog (SMCR5) (Macaca fascicularis (Crab-eating macaque)).